A 315-amino-acid chain; its full sequence is Acetyl-coenzyme A carboxylase carboxyl transferase subunit alpha (315 aa).

The 255-residue stretch at 38 to 292 (RLQKKSNELT…KLRLKEDLAE (255 aa)) folds into the CoA carboxyltransferase C-terminal domain.

The protein belongs to the AccA family. Acetyl-CoA carboxylase is a heterohexamer composed of biotin carboxyl carrier protein (AccB), biotin carboxylase (AccC) and two subunits each of ACCase subunit alpha (AccA) and ACCase subunit beta (AccD).

The protein resides in the cytoplasm. It carries out the reaction N(6)-carboxybiotinyl-L-lysyl-[protein] + acetyl-CoA = N(6)-biotinyl-L-lysyl-[protein] + malonyl-CoA. It participates in lipid metabolism; malonyl-CoA biosynthesis; malonyl-CoA from acetyl-CoA: step 1/1. In terms of biological role, component of the acetyl coenzyme A carboxylase (ACC) complex. First, biotin carboxylase catalyzes the carboxylation of biotin on its carrier protein (BCCP) and then the CO(2) group is transferred by the carboxyltransferase to acetyl-CoA to form malonyl-CoA. The protein is Acetyl-coenzyme A carboxylase carboxyl transferase subunit alpha of Haemophilus influenzae (strain 86-028NP).